We begin with the raw amino-acid sequence, 543 residues long: MFS-type transporter pyvG (543 aa).

The tract at residues 24 to 71 (PPTEQQPGFQLPPPYRLAATRTQPQQQQEQEQEQEQAKPATRPPWNEP) is disordered. The N-linked (GlcNAc...) asparagine glycan is linked to asparagine 94. 12 helical membrane passes run 101 to 121 (LLVYLEVNLITFMVYMSVAIF), 141 to 161 (LGMSLYVLGYGTGPMIWSPLS), 178 to 198 (IFLLLSIPTAVVNNVPGFLIL), 203 to 223 (GFFGSPGLATGGASIADVTGL), 230 to 250 (LYVWAVCSIAGPAVAPVIAGF), 259 to 279 (WSMWEVLWAAGGCFVFLLFLP), 335 to 355 (PAILFTTVYIGLVYAIFYSYF), 374 to 394 (GLIFLGAIVGTLLVLPGYFAF), 415 to 435 (LVPALCGSVLVPVGLFLFAWT), 440 to 460 (LHWVVPTVGLVLEVAGMSLVI), 476 to 496 (ASLFAINDLARAYLAFAAIMW), and 512 to 532 (LLAGLTVGCVGGMFTLYWWGP).

It belongs to the major facilitator superfamily. CAR1 family.

It localises to the cell membrane. MFS-type transporter; part of the gene cluster that mediates the biosynthesis of pyranoviolin A, a pyranonigrin analog with a C-3 methoxy group. May be involved in the secretion of pyranoviolin A. This is MFS-type transporter pyvG from Aspergillus violaceofuscus (strain CBS 115571).